A 116-amino-acid chain; its full sequence is Large ribosomal subunit protein bL17 (116 aa).

Belongs to the bacterial ribosomal protein bL17 family. As to quaternary structure, part of the 50S ribosomal subunit. Contacts protein L32.

The polypeptide is Large ribosomal subunit protein bL17 (Trichodesmium erythraeum (strain IMS101)).